Here is a 100-residue protein sequence, read N- to C-terminus: Large ribosomal subunit protein bL28 (100 aa).

The interval 1-21 is disordered; that stretch reads MSRVCDITGQGKSFGNKVSHS. Over residues 10–19 the composition is skewed to polar residues; it reads QGKSFGNKVS.

Belongs to the bacterial ribosomal protein bL28 family.

This chain is Large ribosomal subunit protein bL28, found in Ehrlichia canis (strain Jake).